The primary structure comprises 333 residues: Phosphoribosylformylglycinamidine cyclo-ligase (333 aa).

This sequence belongs to the AIR synthase family.

Its subcellular location is the cytoplasm. The catalysed reaction is 2-formamido-N(1)-(5-O-phospho-beta-D-ribosyl)acetamidine + ATP = 5-amino-1-(5-phospho-beta-D-ribosyl)imidazole + ADP + phosphate + H(+). It participates in purine metabolism; IMP biosynthesis via de novo pathway; 5-amino-1-(5-phospho-D-ribosyl)imidazole from N(2)-formyl-N(1)-(5-phospho-D-ribosyl)glycinamide: step 2/2. The protein is Phosphoribosylformylglycinamidine cyclo-ligase of Methanosarcina acetivorans (strain ATCC 35395 / DSM 2834 / JCM 12185 / C2A).